The primary structure comprises 267 residues: Very long chain fatty acid elongase 6 (267 aa).

N-linked (GlcNAc...) asparagine glycosylation occurs at Asn2. The next 7 membrane-spanning stretches (helical) occupy residues Phe34 to Met51, Leu70 to Met90, Phe111 to Ile131, Lys136 to Tyr156, Met159 to Ser179, Phe197 to Phe217, and Ile234 to Glu254.

It belongs to the ELO family. ELOVL6 subfamily. In terms of processing, N-Glycosylated. In terms of tissue distribution, expressed in liver and barely in brain.

The protein resides in the endoplasmic reticulum membrane. The enzyme catalyses a very-long-chain acyl-CoA + malonyl-CoA + H(+) = a very-long-chain 3-oxoacyl-CoA + CO2 + CoA. It carries out the reaction hexadecanoyl-CoA + malonyl-CoA + H(+) = 3-oxooctadecanoyl-CoA + CO2 + CoA. It catalyses the reaction (9Z)-hexadecenoyl-CoA + malonyl-CoA + H(+) = 3-oxo-(11Z)-octadecenoyl-CoA + CO2 + CoA. The catalysed reaction is dodecanoyl-CoA + malonyl-CoA + H(+) = 3-oxotetradecanoyl-CoA + CO2 + CoA. The enzyme catalyses tetradecanoyl-CoA + malonyl-CoA + H(+) = 3-oxohexadecanoyl-CoA + CO2 + CoA. It carries out the reaction (9Z)-octadecenoyl-CoA + malonyl-CoA + H(+) = 3-oxo-(11Z)-eicosenoyl-CoA + CO2 + CoA. It catalyses the reaction (9Z,12Z)-octadecadienoyl-CoA + malonyl-CoA + H(+) = (11Z,14Z)-3-oxoicosa-11,14-dienoyl-CoA + CO2 + CoA. The catalysed reaction is (9Z,12Z,15Z)-octadecatrienoyl-CoA + malonyl-CoA + H(+) = (11Z,14Z,17Z)-3-oxoeicosatrienoyl-CoA + CO2 + CoA. The protein operates within lipid metabolism; fatty acid biosynthesis. With respect to regulation, the reaction is stimulated by the presence of HSD17B12, the enzyme catalyzing the second step of the elongation cycle. Catalyzes the first and rate-limiting reaction of the four reactions that constitute the long-chain fatty acids elongation cycle. This endoplasmic reticulum-bound enzymatic process allows the addition of 2 carbons to the chain of long- and very long-chain fatty acids (VLCFAs) per cycle. Condensing enzyme that elongates fatty acids with 12, 14 and 16 carbons with higher activity toward C16:0 acyl-CoAs. Catalyzes the synthesis of unsaturated C16 long chain fatty acids and, to a lesser extent, C18:0 and those with low desaturation degree. May participate in the production of saturated and monounsaturated VLCFAs of different chain lengths that are involved in multiple biological processes as precursors of membrane lipids and lipid mediators. The chain is Very long chain fatty acid elongase 6 from Rattus norvegicus (Rat).